A 460-amino-acid polypeptide reads, in one-letter code: Probable serine/threonine-protein kinase kinase DDB_G0280557 (460 aa).

One can recognise a Protein kinase domain in the interval 102–416; that stretch reads INLKSITDCG…IDQLLAHKYF (315 aa). ATP-binding positions include lysine 131 and 154–162; that span reads QRHFQQHPL. The Proton acceptor role is filled by aspartate 250.

Belongs to the protein kinase superfamily. CMGC Ser/Thr protein kinase family. MAP kinase subfamily.

The enzyme catalyses L-seryl-[protein] + ATP = O-phospho-L-seryl-[protein] + ADP + H(+). The catalysed reaction is L-threonyl-[protein] + ATP = O-phospho-L-threonyl-[protein] + ADP + H(+). This chain is Probable serine/threonine-protein kinase kinase DDB_G0280557, found in Dictyostelium discoideum (Social amoeba).